The following is a 432-amino-acid chain: Lipoyl synthase, mitochondrial (432 aa).

The span at 32–68 (TLGATPGSTSTSTSTSTATTTTLESTSTSTSGDATET) shows a compositional bias: low complexity. The segment at 32 to 71 (TLGATPGSTSTSTSTSTATTTTLESTSTSTSGDATETTIK) is disordered. [4Fe-4S] cluster contacts are provided by Cys150, Cys155, Cys161, Cys180, Cys184, Cys187, and Ser395. The 220-residue stretch at 165–384 (KKSEATATIM…RDVALEMGFL (220 aa)) folds into the Radical SAM core domain.

This sequence belongs to the radical SAM superfamily. Lipoyl synthase family. The cofactor is [4Fe-4S] cluster.

It is found in the mitochondrion. It catalyses the reaction [[Fe-S] cluster scaffold protein carrying a second [4Fe-4S](2+) cluster] + N(6)-octanoyl-L-lysyl-[protein] + 2 oxidized [2Fe-2S]-[ferredoxin] + 2 S-adenosyl-L-methionine + 4 H(+) = [[Fe-S] cluster scaffold protein] + N(6)-[(R)-dihydrolipoyl]-L-lysyl-[protein] + 4 Fe(3+) + 2 hydrogen sulfide + 2 5'-deoxyadenosine + 2 L-methionine + 2 reduced [2Fe-2S]-[ferredoxin]. It participates in protein modification; protein lipoylation via endogenous pathway; protein N(6)-(lipoyl)lysine from octanoyl-[acyl-carrier-protein]: step 2/2. Its function is as follows. Catalyzes the radical-mediated insertion of two sulfur atoms into the C-6 and C-8 positions of the octanoyl moiety bound to the lipoyl domains of lipoate-dependent enzymes, thereby converting the octanoylated domains into lipoylated derivatives. The protein is Lipoyl synthase, mitochondrial of Lodderomyces elongisporus (strain ATCC 11503 / CBS 2605 / JCM 1781 / NBRC 1676 / NRRL YB-4239) (Yeast).